The primary structure comprises 1185 residues: Zinc finger SWIM domain-containing protein 5 (1185 aa).

A compositionally biased stretch (basic and acidic residues) spans methionine 1–leucine 10. Disordered regions lie at residues methionine 1–glycine 45 and alanine 123–proline 153. The segment at tyrosine 219–isoleucine 256 adopts an SWIM-type zinc-finger fold.

This chain is Zinc finger SWIM domain-containing protein 5 (ZSWIM5), found in Homo sapiens (Human).